The sequence spans 310 residues: Olfactory receptor 4C11 (310 aa).

Topologically, residues 1 to 23 are extracellular; that stretch reads MQQNNSVPEFILLGLTQDPLRQK. N-linked (GlcNAc...) asparagine glycosylation occurs at asparagine 4. Residues 24-47 traverse the membrane as a helical segment; the sequence is IVFVIFLIFYMGTVVGNMLIIVTI. Residues 48 to 55 lie on the Cytoplasmic side of the membrane; sequence KSSRTLGS. The helical transmembrane segment at 56-77 threads the bilayer; that stretch reads PMYFFLFYLSFADSCFSTSTAP. At 78-98 the chain is on the extracellular side; it reads RLIVDALSEKKIITYNECMTQ. Cysteine 95 and cysteine 187 are oxidised to a cystine. A helical transmembrane segment spans residues 99–118; sequence VFALHLFGCMEIFVLILMAV. Residues 119–137 are Cytoplasmic-facing; the sequence is DRYVAICKPLRYPTIMSQQ. The helical transmembrane segment at 138 to 156 threads the bilayer; sequence VCIILIVLAWIGSLIHSTA. Over 157-193 the chain is Extracellular; that stretch reads QIILALRLPFCGPYLIDHYCCDLQPLLKLACMDTYMI. The helical transmembrane segment at 194–217 threads the bilayer; the sequence is NLLLVSNSGAICSSSFMILIISYI. Topologically, residues 218–233 are cytoplasmic; it reads VILHSLRNHSAKGKKK. The helical transmembrane segment at 234–256 threads the bilayer; the sequence is ALSACTSHIIVVILFFGPCIFIY. The Extracellular portion of the chain corresponds to 257–267; sequence TRPPTTFPMDK. A helical membrane pass occupies residues 268-287; that stretch reads MVAVFYTIGTPFLNPLIYTL. Over 288 to 310 the chain is Cytoplasmic; sequence RNAEVKNAMRKLWHGKIISENKG.

It belongs to the G-protein coupled receptor 1 family.

It is found in the cell membrane. In terms of biological role, odorant receptor. The sequence is that of Olfactory receptor 4C11 (OR4C11) from Homo sapiens (Human).